A 33-amino-acid polypeptide reads, in one-letter code: Cytochrome b6-f complex subunit 8 (33 aa).

The chain crosses the membrane as a helical span at residues 2-22 (LISLGWAALAATFTFSIAMVV).

Belongs to the PetN family. As to quaternary structure, the 4 large subunits of the cytochrome b6-f complex are cytochrome b6, subunit IV (17 kDa polypeptide, PetD), cytochrome f and the Rieske protein, while the 4 small subunits are PetG, PetL, PetM and PetN. The complex functions as a dimer.

The protein resides in the cellular thylakoid membrane. Component of the cytochrome b6-f complex, which mediates electron transfer between photosystem II (PSII) and photosystem I (PSI), cyclic electron flow around PSI, and state transitions. The chain is Cytochrome b6-f complex subunit 8 from Synechococcus sp. (strain RCC307).